The following is a 102-amino-acid chain: PqqA binding protein (102 aa).

This sequence belongs to the PqqD family. As to quaternary structure, monomer. Interacts with PqqE.

Its pathway is cofactor biosynthesis; pyrroloquinoline quinone biosynthesis. Functions as a PqqA binding protein and presents PqqA to PqqE, in the pyrroloquinoline quinone (PQQ) biosynthetic pathway. In Rhodopseudomonas palustris (strain HaA2), this protein is PqqA binding protein.